Reading from the N-terminus, the 160-residue chain is Cyanate hydratase (160 aa).

Active-site residues include Arg100, Glu103, and Ser126.

This sequence belongs to the cyanase family.

It carries out the reaction cyanate + hydrogencarbonate + 3 H(+) = NH4(+) + 2 CO2. Its function is as follows. Catalyzes the reaction of cyanate with bicarbonate to produce ammonia and carbon dioxide. This Emericella nidulans (strain FGSC A4 / ATCC 38163 / CBS 112.46 / NRRL 194 / M139) (Aspergillus nidulans) protein is Cyanate hydratase.